Reading from the N-terminus, the 216-residue chain is Translation initiation factor 6 (216 aa).

It belongs to the eIF-6 family.

In terms of biological role, binds to the 50S ribosomal subunit and prevents its association with the 30S ribosomal subunit to form the 70S initiation complex. This is Translation initiation factor 6 from Thermoplasma acidophilum (strain ATCC 25905 / DSM 1728 / JCM 9062 / NBRC 15155 / AMRC-C165).